A 281-amino-acid polypeptide reads, in one-letter code: Phosphatidylglycerol--prolipoprotein diacylglyceryl transferase (281 aa).

The next 4 helical transmembrane spans lie at 29–49 (FYSLAYIVGIVLAYWHLGKMI), 64–84 (LFFYCTLGVIFGGRIGYVLFY), 100–120 (GGMSFHGGVIGVVLAILFVSW), and 124–144 (LNWLRVCDYIAVNVPFGMFLG). Residue Arg145 participates in a 1,2-diacyl-sn-glycero-3-phospho-(1'-sn-glycerol) binding. The next 3 helical transmembrane spans lie at 180 to 200 (QLYQAGLEGLLMMAVMLLLFW), 209 to 229 (GVLVGVFTIGIAGARFVNEFF), and 248 to 268 (GQWLSIPMILVGLAVVVYALT).

Belongs to the Lgt family.

It is found in the cell inner membrane. The enzyme catalyses L-cysteinyl-[prolipoprotein] + a 1,2-diacyl-sn-glycero-3-phospho-(1'-sn-glycerol) = an S-1,2-diacyl-sn-glyceryl-L-cysteinyl-[prolipoprotein] + sn-glycerol 1-phosphate + H(+). Its pathway is protein modification; lipoprotein biosynthesis (diacylglyceryl transfer). Catalyzes the transfer of the diacylglyceryl group from phosphatidylglycerol to the sulfhydryl group of the N-terminal cysteine of a prolipoprotein, the first step in the formation of mature lipoproteins. This chain is Phosphatidylglycerol--prolipoprotein diacylglyceryl transferase, found in Erythrobacter litoralis (strain HTCC2594).